A 135-amino-acid chain; its full sequence is UPF0225 protein CV_3559 (135 aa).

Belongs to the UPF0225 family.

The chain is UPF0225 protein CV_3559 from Chromobacterium violaceum (strain ATCC 12472 / DSM 30191 / JCM 1249 / CCUG 213 / NBRC 12614 / NCIMB 9131 / NCTC 9757 / MK).